The primary structure comprises 406 residues: Probable endo-xylogalacturonan hydrolase A (406 aa).

Positions 1–18 (MLYPRNLALFSLLSLSSA) are cleaved as a signal peptide. 4 PbH1 repeats span residues 183 to 213 (TQHVTFKNLRMDATSNSQNPPKNTDGFDIGA), 214 to 235 (STHVTISSVSVTNDDDCVAFKP), 237 to 257 (SNYVTVEDVTCTGSHGISVGS), and 299 to 320 (VKNVTFSDFNVRGCDYAFQIES). The active-site Proton donor is Asp228. Residue His251 is part of the active site. Asn301 is a glycosylation site (N-linked (GlcNAc...) asparagine).

This sequence belongs to the glycosyl hydrolase 28 family.

The protein resides in the secreted. Functionally, pectinolytic enzyme involved in the degradation of xylogalacturonan (xga), a galacturonan backbone heavily substituted with xylose, and which is one important component of the hairy regions of pectin. Activity requires a galacturonic acid backbone substituted with xylose. The sequence is that of Probable endo-xylogalacturonan hydrolase A (xghA) from Aspergillus fumigatus (strain ATCC MYA-4609 / CBS 101355 / FGSC A1100 / Af293) (Neosartorya fumigata).